A 78-amino-acid chain; its full sequence is Structural DNA-binding protein p10 (78 aa).

Residues 1–24 (MPTKAGTKSTANKKTTKGSSKSGS) show a composition bias toward low complexity. The tract at residues 1 to 41 (MPTKAGTKSTANKKTTKGSSKSGSPRGHTGKTHAPPSMHSG) is disordered.

Belongs to the asfivirus P10 family.

It is found in the virion. Its function is as follows. May play a role in genome packaging through direct interaction with viral DNA. Binds to ssDNA and dsDNA with the same apparent affinity in vitro. This African swine fever virus (isolate Tick/South Africa/Pretoriuskop Pr4/1996) (ASFV) protein is Structural DNA-binding protein p10.